We begin with the raw amino-acid sequence, 322 residues long: Arginase-1 (322 aa).

The segment at 1-27 (MSSKPQSIGVIGAPFSKGQPRGGVEEG) is disordered. S7 carries the phosphoserine modification. N6-succinyllysine is present on K17. The residue at position 62 (S62) is a Phosphoserine. K75 is modified (N6-succinyllysine). H101, D124, H126, and D128 together coordinate Mn(2+). Residues 126–130 (HTDIN), 137–139 (TGN), and D183 contribute to the substrate site. Phosphoserine is present on S217. Positions 232 and 234 each coordinate Mn(2+). Substrate-binding residues include T246 and E277.

The protein belongs to the arginase family. In terms of assembly, homotrimer. Interacts with CMTM6. Mn(2+) serves as cofactor.

It localises to the cytoplasm. It carries out the reaction L-arginine + H2O = urea + L-ornithine. It participates in nitrogen metabolism; urea cycle; L-ornithine and urea from L-arginine: step 1/1. The polypeptide is Arginase-1 (ARG1) (Bos taurus (Bovine)).